A 261-amino-acid polypeptide reads, in one-letter code: Thioesterase frbD (261 aa).

It belongs to the AMT4 thioesterase family.

It functions in the pathway antifungal biosynthesis. In terms of biological role, thioesterase; part of the gene cluster that mediates the biosynthesis of the antifungal antibiotic FR901469, an inhibitor of beta-1,3-glucansynthase, exerting antifungal activity against the pathogenes Candida albicans and Aspergillus fumigatus. FR901469 is a cyclic depsipeptide containing 12 amino acid residues and a fatty acid chain. The NRPS frbI contains 12 modules responsible for the formation of the depsipeptide backbone which is denoted as Acyl-Thr-Ala-Tyr-Val-4OHPro-Thr-Thr-3OHPro-threo3OHGln-Gly-Thr-Orn-OH (C71H116N14O23). The PKS frbB is probably involved in the production of the hydrocarbon chain, and the acyl-CoA ligase frbC might be involved in the transport of the chain to the peptide ptoduct of frbI. Because FR901469 contains 3 hydroxylated amino acid residues, the 3 oxygenases frbA, frbH, and frbJ might be participating in amino acid hydroxylation. As no thioesterase domains were detected in frbI or frbB, the thioesterases frbD and frbE may instead release and cyclize the products of the NRPS and PKS, respectively. The polypeptide is Thioesterase frbD (Dothideomycetidae sp. (strain 11243) (Fungal sp. (strain No.11243))).